Consider the following 647-residue polypeptide: Threonine--tRNA ligase (647 aa).

In terms of domain architecture, TGS spans 1–61; that stretch reads MIKITFPDGA…EEDGSIEIVT (61 aa). Residues 240–538 are catalytic; it reads DHRKLGKELD…LIETYKGAFP (299 aa). 3 residues coordinate Zn(2+): cysteine 334, histidine 385, and histidine 515.

It belongs to the class-II aminoacyl-tRNA synthetase family. As to quaternary structure, homodimer. The cofactor is Zn(2+).

It is found in the cytoplasm. The catalysed reaction is tRNA(Thr) + L-threonine + ATP = L-threonyl-tRNA(Thr) + AMP + diphosphate + H(+). Catalyzes the attachment of threonine to tRNA(Thr) in a two-step reaction: L-threonine is first activated by ATP to form Thr-AMP and then transferred to the acceptor end of tRNA(Thr). Also edits incorrectly charged L-seryl-tRNA(Thr). The sequence is that of Threonine--tRNA ligase from Streptococcus pyogenes serotype M6 (strain ATCC BAA-946 / MGAS10394).